The sequence spans 243 residues: Orotidine 5'-phosphate decarboxylase (243 aa).

Substrate-binding positions include D16, K38, 65–74, T120, R181, Q190, G210, and R211; that span reads DLKLHDIPNT. The active-site Proton donor is K67.

Belongs to the OMP decarboxylase family. Type 1 subfamily. As to quaternary structure, homodimer.

The enzyme catalyses orotidine 5'-phosphate + H(+) = UMP + CO2. Its pathway is pyrimidine metabolism; UMP biosynthesis via de novo pathway; UMP from orotate: step 2/2. Functionally, catalyzes the decarboxylation of orotidine 5'-monophosphate (OMP) to uridine 5'-monophosphate (UMP). The sequence is that of Orotidine 5'-phosphate decarboxylase from Bradyrhizobium sp. (strain BTAi1 / ATCC BAA-1182).